Here is a 397-residue protein sequence, read N- to C-terminus: 1-deoxy-D-xylulose 5-phosphate reductoisomerase (397 aa).

T10, G11, S12, I13, G36, K37, N38, and N124 together coordinate NADPH. K125 is a 1-deoxy-D-xylulose 5-phosphate binding site. NADPH is bound at residue E126. A Mn(2+)-binding site is contributed by D150. 1-deoxy-D-xylulose 5-phosphate contacts are provided by S151, E152, S186, and H209. Residue E152 participates in Mn(2+) binding. G215 is a binding site for NADPH. 1-deoxy-D-xylulose 5-phosphate is bound by residues S222, N227, K228, and E231. E231 is a binding site for Mn(2+).

It belongs to the DXR family. As to quaternary structure, homodimer. The cofactor is Mg(2+). Mn(2+) is required as a cofactor.

It carries out the reaction 2-C-methyl-D-erythritol 4-phosphate + NADP(+) = 1-deoxy-D-xylulose 5-phosphate + NADPH + H(+). Its pathway is isoprenoid biosynthesis; isopentenyl diphosphate biosynthesis via DXP pathway; isopentenyl diphosphate from 1-deoxy-D-xylulose 5-phosphate: step 1/6. Functionally, catalyzes the NADPH-dependent rearrangement and reduction of 1-deoxy-D-xylulose-5-phosphate (DXP) to 2-C-methyl-D-erythritol 4-phosphate (MEP). This is 1-deoxy-D-xylulose 5-phosphate reductoisomerase from Proteus mirabilis (strain HI4320).